Reading from the N-terminus, the 281-residue chain is NH(3)-dependent NAD(+) synthetase (281 aa).

24–31 (GVSGGVDS) lines the ATP pocket. Aspartate 30 serves as a coordination point for Mg(2+). Deamido-NAD(+) is bound at residue arginine 145. Position 165 (threonine 165) interacts with ATP. Glutamate 170 contacts Mg(2+). Lysine 178 and aspartate 185 together coordinate deamido-NAD(+). Residues lysine 194 and serine 216 each coordinate ATP.

The protein belongs to the NAD synthetase family. As to quaternary structure, homodimer.

It carries out the reaction deamido-NAD(+) + NH4(+) + ATP = AMP + diphosphate + NAD(+) + H(+). The protein operates within cofactor biosynthesis; NAD(+) biosynthesis; NAD(+) from deamido-NAD(+) (ammonia route): step 1/1. Catalyzes the ATP-dependent amidation of deamido-NAD to form NAD. Uses ammonia as a nitrogen source. This is NH(3)-dependent NAD(+) synthetase (nadE1) from Thermotoga maritima (strain ATCC 43589 / DSM 3109 / JCM 10099 / NBRC 100826 / MSB8).